Reading from the N-terminus, the 536-residue chain is Phosphoenolpyruvate carboxykinase (ATP) (536 aa).

Residues Arg63, Tyr203, and Lys209 each contribute to the substrate site. Residues Lys209, His228, and 244-252 contribute to the ATP site; that span reads GLSGTGKTT. Positions 209 and 228 each coordinate Mn(2+). Residue Asp265 participates in Mn(2+) binding. ATP is bound by residues Glu293, Arg329, 445–446, and Thr451; that span reads RI. Substrate is bound at residue Arg329.

The protein belongs to the phosphoenolpyruvate carboxykinase (ATP) family. Monomer. It depends on Mn(2+) as a cofactor.

The protein localises to the cytoplasm. The enzyme catalyses oxaloacetate + ATP = phosphoenolpyruvate + ADP + CO2. It participates in carbohydrate biosynthesis; gluconeogenesis. In terms of biological role, involved in the gluconeogenesis. Catalyzes the conversion of oxaloacetate (OAA) to phosphoenolpyruvate (PEP) through direct phosphoryl transfer between the nucleoside triphosphate and OAA. This Colwellia psychrerythraea (strain 34H / ATCC BAA-681) (Vibrio psychroerythus) protein is Phosphoenolpyruvate carboxykinase (ATP).